The chain runs to 359 residues: CMP-N-acetylneuraminate-poly-alpha-2,8-sialyltransferase (359 aa).

Residues 1–7 lie on the Cytoplasmic side of the membrane; the sequence is MRSIRKR. A helical; Signal-anchor for type II membrane protein transmembrane segment spans residues 8-20; sequence WTICTISLLLIFY. Residues 21-359 are Lumenal-facing; it reads KTKEIARTEE…KLTTGKCVKQ (339 aa). Residues asparagine 50, asparagine 74, and asparagine 119 are each glycosylated (N-linked (GlcNAc...) asparagine). 2 disulfides stabilise this stretch: cysteine 142/cysteine 292 and cysteine 156/cysteine 356. The CMP-N-acetyl-beta-neuraminate site is built by asparagine 147 and asparagine 170. N-linked (GlcNAc...) asparagine glycosylation is found at asparagine 204 and asparagine 219. CMP-N-acetyl-beta-neuraminate-binding residues include serine 279, threonine 280, glycine 281, and tryptophan 301. Histidine 331 (proton donor/acceptor) is an active-site residue.

It belongs to the glycosyltransferase 29 family. Post-translationally, autopolysialylated.

It is found in the golgi apparatus membrane. Its subcellular location is the secreted. It carries out the reaction [N-acetyl-alpha-D-neuraminosyl-(2-&gt;8)](n) + CMP-N-acetyl-beta-neuraminate = [N-acetyl-alpha-D-neuraminosyl-(2-&gt;8)](n+1) + CMP + H(+). Catalyzes the transfer of a sialic acid from a CMP-linked sialic acid donor onto a terminal alpha-2,3-, alpha-2,6-, or alpha-2,8-linked sialic acid of an N-linked glycan protein acceptor through alpha-2,8-linkages. Therefore, participates in polysialic acid synthesis on various sialylated N-acetyllactosaminyl oligosaccharides, including NCAM1 N-glycans, FETUB N-glycans and AHSG. It is noteworthy that alpha-2,3-linked sialic acid is apparently a better acceptor than alpha-2,6-linked sialic acid. The chain is CMP-N-acetylneuraminate-poly-alpha-2,8-sialyltransferase (ST8SIA4) from Pan troglodytes (Chimpanzee).